A 228-amino-acid chain; its full sequence is 2,3-bisphosphoglycerate-dependent phosphoglycerate mutase (228 aa).

Substrate-binding positions include 8-15 (RHGQSEWN), 21-22 (TG), Arg-60, 87-90 (ERHY), Lys-98, 114-115 (RR), and 183-184 (GN). His-9 (tele-phosphohistidine intermediate) is an active-site residue. The Proton donor/acceptor role is filled by Glu-87.

This sequence belongs to the phosphoglycerate mutase family. BPG-dependent PGAM subfamily.

It catalyses the reaction (2R)-2-phosphoglycerate = (2R)-3-phosphoglycerate. It participates in carbohydrate degradation; glycolysis; pyruvate from D-glyceraldehyde 3-phosphate: step 3/5. Its function is as follows. Catalyzes the interconversion of 2-phosphoglycerate and 3-phosphoglycerate. This is 2,3-bisphosphoglycerate-dependent phosphoglycerate mutase from Staphylococcus epidermidis (strain ATCC 12228 / FDA PCI 1200).